A 339-amino-acid chain; its full sequence is Ketol-acid reductoisomerase (NADP(+)) (339 aa).

Residues 1-182 (MRVYYDRDAD…GGGRSGVIET (182 aa)) enclose the KARI N-terminal Rossmann domain. NADP(+) is bound by residues 24–27 (YGSQ), R48, S51, T53, and 83–86 (DELQ). H108 is an active-site residue. G134 contacts NADP(+). The 146-residue stretch at 183–328 (TFKEECETDL…GKLRAMMPWI (146 aa)) folds into the KARI C-terminal knotted domain. Mg(2+) is bound by residues D191, E195, E227, and E231. S252 is a binding site for substrate.

This sequence belongs to the ketol-acid reductoisomerase family. Mg(2+) serves as cofactor.

It carries out the reaction (2R)-2,3-dihydroxy-3-methylbutanoate + NADP(+) = (2S)-2-acetolactate + NADPH + H(+). It catalyses the reaction (2R,3R)-2,3-dihydroxy-3-methylpentanoate + NADP(+) = (S)-2-ethyl-2-hydroxy-3-oxobutanoate + NADPH + H(+). It functions in the pathway amino-acid biosynthesis; L-isoleucine biosynthesis; L-isoleucine from 2-oxobutanoate: step 2/4. The protein operates within amino-acid biosynthesis; L-valine biosynthesis; L-valine from pyruvate: step 2/4. In terms of biological role, involved in the biosynthesis of branched-chain amino acids (BCAA). Catalyzes an alkyl-migration followed by a ketol-acid reduction of (S)-2-acetolactate (S2AL) to yield (R)-2,3-dihydroxy-isovalerate. In the isomerase reaction, S2AL is rearranged via a Mg-dependent methyl migration to produce 3-hydroxy-3-methyl-2-ketobutyrate (HMKB). In the reductase reaction, this 2-ketoacid undergoes a metal-dependent reduction by NADPH to yield (R)-2,3-dihydroxy-isovalerate. This is Ketol-acid reductoisomerase (NADP(+)) from Brucella abortus (strain S19).